We begin with the raw amino-acid sequence, 636 residues long: DNA-directed RNA polymerase III subunit RPC3 (636 aa).

A disordered region spans residues 366–385 (SMQRRSQERSTHQGQSHKRL). The segment at 563–584 (LAWNIANSIHKTEILKEENFTL) is leucine-zipper.

Belongs to the RNA polymerase beta chain family. In terms of assembly, component of the RNA polymerase III (Pol III) complex consisting of 17 subunits.

The protein resides in the nucleus. DNA-dependent RNA polymerase catalyzes the transcription of DNA into RNA using the four ribonucleoside triphosphates as substrates. Specific core component of RNA polymerase III which synthesizes small RNAs, such as 5S rRNA and tRNAs. The protein is DNA-directed RNA polymerase III subunit RPC3 (RPC82) of Eremothecium gossypii (strain ATCC 10895 / CBS 109.51 / FGSC 9923 / NRRL Y-1056) (Yeast).